Reading from the N-terminus, the 780-residue chain is Protein phosphatase 1 regulatory subunit 21 (780 aa).

2 coiled-coil regions span residues 1–207 (MASA…LKTL) and 556–607 (ESRE…LKNT). A disordered region spans residues 84–104 (EPRGKKNKKSGESSSQLSQEQ). Low complexity predominate over residues 95-104 (ESSSQLSQEQ). At Thr-652 the chain carries Phosphothreonine. The stretch at 693–742 (YAECRALSKRLALAEKSKEALTEEMKLASQNISRLQDELTTTKRSYEDQL) forms a coiled coil. Residues 760 to 780 (REEIDTLKMSSKGNSKKNKSR) form a disordered region.

Component of the FERRY complex, composed of five subunits: TBCK, PPP1R21, FERRY3, CRYZL1 and GATAD1, with a ratio of 1:2:1:2:4 respectively. PPP1R21 serves as a binding hub connecting all five complex subunits to mediate the binding to specific mitochondrial mRNAs. Interacts with the GTP-bound form of RAB5A (via its C-terminal region); linking the mRNP complex onto trafficking endosomes for active mRNA transport. Interacts with PPP1CA.

Its subcellular location is the early endosome. In terms of biological role, component of the FERRY complex (Five-subunit Endosomal Rab5 and RNA/ribosome intermediary). The FERRY complex directly interacts with mRNAs and RAB5A, and functions as a RAB5A effector involved in the localization and the distribution of specific mRNAs most likely by mediating their endosomal transport. The complex recruits mRNAs and ribosomes to early endosomes through direct mRNA-interaction. In the complex, PPP1R21 serves as a binding hub connecting all five complex subunits and mediating the binding to mRNA and early endosomes via RAB5A. Putative regulator of protein phosphatase 1 (PP1) activity. May play a role in the endosomal sorting process or in endosome maturation pathway. The protein is Protein phosphatase 1 regulatory subunit 21 (PPP1R21) of Homo sapiens (Human).